The primary structure comprises 409 residues: S-adenosylmethionine synthase (409 aa).

H15 contributes to the ATP binding site. D17 serves as a coordination point for Mg(2+). Residue E43 participates in K(+) binding. Positions 56 and 100 each coordinate L-methionine. A flexible loop region spans residues 100-110 (QSSDIAQGVNE). Residues 171-173 (DGK), 248-249 (KF), D257, 263-264 (RK), A280, and K284 contribute to the ATP site. Residue D257 coordinates L-methionine. K288 is a binding site for L-methionine.

It belongs to the AdoMet synthase family. Homotetramer; dimer of dimers. It depends on Mg(2+) as a cofactor. The cofactor is K(+).

It is found in the cytoplasm. It catalyses the reaction L-methionine + ATP + H2O = S-adenosyl-L-methionine + phosphate + diphosphate. It participates in amino-acid biosynthesis; S-adenosyl-L-methionine biosynthesis; S-adenosyl-L-methionine from L-methionine: step 1/1. Catalyzes the formation of S-adenosylmethionine (AdoMet) from methionine and ATP. The overall synthetic reaction is composed of two sequential steps, AdoMet formation and the subsequent tripolyphosphate hydrolysis which occurs prior to release of AdoMet from the enzyme. In Prochlorococcus marinus (strain NATL2A), this protein is S-adenosylmethionine synthase.